Consider the following 200-residue polypeptide: Large ribosomal subunit protein uL4 (200 aa).

A disordered region spans residues 42–65; it reads TRAQKTRSEVSGGGAKPWRQKGTG.

This sequence belongs to the universal ribosomal protein uL4 family. As to quaternary structure, part of the 50S ribosomal subunit.

Functionally, one of the primary rRNA binding proteins, this protein initially binds near the 5'-end of the 23S rRNA. It is important during the early stages of 50S assembly. It makes multiple contacts with different domains of the 23S rRNA in the assembled 50S subunit and ribosome. Its function is as follows. Forms part of the polypeptide exit tunnel. This is Large ribosomal subunit protein uL4 from Vibrio atlanticus (strain LGP32) (Vibrio splendidus (strain Mel32)).